Reading from the N-terminus, the 139-residue chain is MSFMREFKEFAMRGNVIDLAVGVIIGAAFGKIVDSLVKDIVMPVIGRLLGGVDFRHLYINLGDQTYETMEAAEKAGAPLVKYGQFINTTIDFLIIAFAIFVAVKAINRLKRSEPPPPPAPVEAEEVKLLREIRDTLKRG.

The next 2 membrane-spanning stretches (helical) occupy residues 16-36 (VIDLAVGVIIGAAFGKIVDSL) and 83-103 (GQFINTTIDFLIIAFAIFVAV).

The protein belongs to the MscL family. In terms of assembly, homopentamer.

Its subcellular location is the cell inner membrane. In terms of biological role, channel that opens in response to stretch forces in the membrane lipid bilayer. May participate in the regulation of osmotic pressure changes within the cell. This is Large-conductance mechanosensitive channel from Aromatoleum aromaticum (strain DSM 19018 / LMG 30748 / EbN1) (Azoarcus sp. (strain EbN1)).